Here is an 88-residue protein sequence, read N- to C-terminus: RQC P-site tRNA stabilizing factor (88 aa).

The 60-residue stretch at 1–60 (MRLDKYLKVSRIIKRRTVAKEVADKGRIKVNGILAKSSTDLKVNDQVEIRFGNKLLLVKV) folds into the S4 RNA-binding domain.

The protein belongs to the RqcP family. As to quaternary structure, associates with stalled 50S ribosomal subunits. Binds to RqcH, 23S rRNA and the P-site tRNA. Does not require RqcH for association with 50S subunits.

Its function is as follows. Key component of the ribosome quality control system (RQC), a ribosome-associated complex that mediates the extraction of incompletely synthesized nascent chains from stalled ribosomes and their subsequent degradation. RqcH recruits Ala-charged tRNA, and with RqcP directs the elongation of stalled nascent chains on 50S ribosomal subunits, leading to non-templated C-terminal alanine extensions (Ala tail). The Ala tail promotes nascent chain degradation. RqcP is associated with the translocation-like movement of the peptidyl-tRNA from the A-site into the P-site. In Streptococcus pneumoniae (strain ATCC BAA-255 / R6), this protein is RQC P-site tRNA stabilizing factor.